The chain runs to 113 residues: Nucleoid-associated protein PMT_0025 (113 aa).

The protein belongs to the YbaB/EbfC family. Homodimer.

It localises to the cytoplasm. The protein localises to the nucleoid. Its function is as follows. Binds to DNA and alters its conformation. May be involved in regulation of gene expression, nucleoid organization and DNA protection. This chain is Nucleoid-associated protein PMT_0025, found in Prochlorococcus marinus (strain MIT 9313).